A 274-amino-acid polypeptide reads, in one-letter code: SWI/SNF chromatin-remodeling complex subunit snf30 (274 aa).

2 stretches are compositionally biased toward polar residues: residues Thr-123–Gln-150 and Pro-157–Ser-167. The segment at Thr-123–Ser-167 is disordered.

As to quaternary structure, component of the SWI/SNF global transcription activator complex composed of at least arp9, arp42, snf5, snf22, snf30, sbf59, sol1, ssr1, ssr2, ssr3, ssr4 and tfg3.

The protein resides in the cytoplasm. Its subcellular location is the nucleus. Component of the SWI/SNF complex, an ATP-dependent chromatin remodeling complex, required for the positive and negative regulation of gene expression of a large number of genes. It changes chromatin structure by altering DNA-histone contacts within a nucleosome, leading eventually to a change in nucleosome position, thus facilitating or repressing binding of gene-specific transcription factors. In Schizosaccharomyces pombe (strain 972 / ATCC 24843) (Fission yeast), this protein is SWI/SNF chromatin-remodeling complex subunit snf30 (snf30).